An 871-amino-acid chain; its full sequence is Patatin-like phospholipase domain-containing protein CNBE2340 (871 aa).

The disordered stretch occupies residues Asn-20–Arg-53. The span at Ser-23 to Pro-33 shows a compositional bias: low complexity. Residues Trp-68 to Thr-88 traverse the membrane as a helical segment. Residues Leu-243–His-435 form the PNPLA domain. Residues Gly-274–Gly-278 carry the GXSXG motif. Ser-276 functions as the Nucleophile in the catalytic mechanism. The active-site Proton acceptor is Asp-422. Disordered stretches follow at residues Ala-586–Asp-707, Leu-720–Arg-748, and Val-760–Ala-871. 2 stretches are compositionally biased toward polar residues: residues Asn-594–Glu-606 and Pro-687–Gly-706. Positions Ser-721–Arg-748 are enriched in low complexity. A compositionally biased stretch (basic and acidic residues) spans Val-798 to Tyr-820.

The protein belongs to the PLPL family.

Its subcellular location is the membrane. Its function is as follows. Probable lipid hydrolase. The polypeptide is Patatin-like phospholipase domain-containing protein CNBE2340 (Cryptococcus neoformans var. neoformans serotype D (strain B-3501A) (Filobasidiella neoformans)).